The sequence spans 333 residues: Eukaryotic translation initiation factor 2 subunit 2 (333 aa).

Disordered regions lie at residues 1 to 87, 98 to 117, and 141 to 165; these read MSGD…KSKK, IKDL…EEDL, and EKDE…QTGP. The residue at position 2 (Ser2) is an N-acetylserine. Phosphoserine is present on residues Ser2 and Ser13. Basic residues predominate over residues 13–22; the sequence is SKKKKKKKKP. Thr36 carries the phosphothreonine modification. Positions 40–51 are enriched in basic and acidic residues; the sequence is ETKEVEPEPTED. The residue at position 67 (Ser67) is a Phosphoserine. A Glycyl lysine isopeptide (Lys-Gly) (interchain with G-Cter in SUMO2) cross-link involves residue Lys102. Ser105 carries the phosphoserine modification. Positions 106-117 are enriched in acidic residues; it reads DVQEPAEPEEDL. Phosphoserine occurs at positions 158 and 218. Residues Lys265 and Lys293 each carry the N6-acetyllysine modification. The C4-type zinc-finger motif lies at 281-305; it reads CHTCRSPDTILQKDTRLYFLQCETC.

Belongs to the eIF-2-beta/eIF-5 family. In terms of assembly, eukaryotic translation initiation factor 2 eIF2 is a heterotrimeric complex composed of an alpha (EIF2S1), a beta (EIF2S2) and a gamma (EIF2S3) chain. eIF2 is member of the 43S pre-initiation complex (43S PIC). eIF2 forms a complex with at least CELF1/CUGBP1, CALR, CALR3, EIF2S1, EIF2S2, HSP90B1 and HSPA5. Interacts with BZW2/5MP1. Interacts with EIF5.

The protein resides in the cytoplasm. Its subcellular location is the cytosol. Component of the eIF2 complex that functions in the early steps of protein synthesis by forming a ternary complex with GTP and initiator tRNA. This complex binds to a 40S ribosomal subunit, followed by mRNA binding to form a 43S pre-initiation complex (43S PIC). Junction of the 60S ribosomal subunit to form the 80S initiation complex is preceded by hydrolysis of the GTP bound to eIF2 and release of an eIF2-GDP binary complex. In order for eIF2 to recycle and catalyze another round of initiation, the GDP bound to eIF2 must exchange with GTP by way of a reaction catalyzed by eIF2B. In Bos taurus (Bovine), this protein is Eukaryotic translation initiation factor 2 subunit 2 (EIF2S2).